The sequence spans 427 residues: Ribitol transporter (427 aa).

At 1-7 (MSVNNKQ) the chain is on the cytoplasmic side. Residues 8–28 (WYGLPLNLIWGYVAIAVFMTG) form a helical membrane-spanning segment. Residues 29–51 (DGFELAFLSHYIKALGFTPAQAS) are Extracellular-facing. A helical transmembrane segment spans residues 52-72 (FAFTLYGLAAALSAWVSGVVA). Over 73 to 79 (EIITPRK) the chain is Cytoplasmic. A helical membrane pass occupies residues 80 to 100 (AMLIGFVLWCVFHVLFLVFGL). Residues 101-107 (GRANYAL) are Extracellular-facing. A helical transmembrane segment spans residues 108–128 (ILLFYGIRGLAYPLFLYSFIV). Residues 129–141 (AIIHNVRSDSSSS) are Cytoplasmic-facing. Residues 142–162 (ALGWFWAVYSVGIGVFGSYIP) form a helical membrane-spanning segment. Topologically, residues 163–171 (SFTIPHIGE) are extracellular. The helical transmembrane segment at 172–192 (MGTLWLALLFCATGGIIALVS) threads the bilayer. At 193–238 (MRHTETPRHMQNLTTREKFAELGRAATLLYTNRSILFSSIVRIINT) the chain is on the cytoplasmic side. The chain crosses the membrane as a helical span at residues 239-259 (LSLFGFAVIMPMMFVDELGFT). The Extracellular segment spans residues 260 to 263 (TSEW). Residues 264 to 284 (LQVWAAFFFTTIFSNVFWGIV) form a helical membrane-spanning segment. The Cytoplasmic segment spans residues 285–295 (AEKMGWMKVIR). Residues 296–316 (WFGCIGMALSSLAFYYLPQHF) form a helical membrane-spanning segment. At 317–323 (GHNFAMA) the chain is on the extracellular side. A helical transmembrane segment spans residues 324-344 (LVPAIALGIFVAAFVPMAAVF). Residues 345-360 (PALEPNHKGAAISVYN) lie on the Cytoplasmic side of the membrane. Residues 361 to 381 (LSAGLSNFLAPAIAVVLLPYF) form a helical membrane-spanning segment. The Extracellular segment spans residues 382 to 383 (ST). Residues 384 to 404 (IGVVIAYTALYILAFFLCPLI) traverse the membrane as a helical segment. Residues 405 to 427 (RVEQPGFTSDQHAKPFTANAAES) are Cytoplasmic-facing.

It belongs to the major facilitator superfamily. Sugar transporter (TC 2.A.1.1) family. CsbX subfamily.

The protein resides in the cell membrane. This chain is Ribitol transporter (rbtT), found in Klebsiella pneumoniae.